Reading from the N-terminus, the 64-residue chain is MRLHHLLLVLFFVVLSAGSGFTQGVRNRLSCHRNKGVCVPSRCPRHMRQIGTCRGPPVKCCRKK.

The signal sequence occupies residues 1 to 22 (MRLHHLLLVLFFVVLSAGSGFT). Cystine bridges form between Cys-31–Cys-60, Cys-38–Cys-53, and Cys-43–Cys-61.

Belongs to the beta-defensin family. In terms of assembly, monomer. Homodimer.

Its subcellular location is the secreted. It localises to the membrane. Its function is as follows. Has bactericidal activity. May act as a ligand for C-C chemokine receptor CCR6. Positively regulates the sperm motility and bactericidal activity in a CCR6-dependent manner. Binds to CCR6 and triggers Ca2+ mobilization in the sperm which is important for its motility. This Ovis aries (Sheep) protein is Beta-defensin 1 (DEFB1).